The sequence spans 278 residues: Ribosomal RNA small subunit methyltransferase J (278 aa).

Residues 143-144 (ER) and Asp-197 contribute to the S-adenosyl-L-methionine site.

Belongs to the methyltransferase superfamily. RsmJ family.

It is found in the cytoplasm. The catalysed reaction is guanosine(1516) in 16S rRNA + S-adenosyl-L-methionine = N(2)-methylguanosine(1516) in 16S rRNA + S-adenosyl-L-homocysteine + H(+). Specifically methylates the guanosine in position 1516 of 16S rRNA. This Marinobacter nauticus (strain ATCC 700491 / DSM 11845 / VT8) (Marinobacter aquaeolei) protein is Ribosomal RNA small subunit methyltransferase J.